The sequence spans 348 residues: Rhodopsin (348 aa).

At 1 to 33 (TEGPYFYVPMVNTTGIVRSPYEYPQYYLVNPAA) the chain is on the extracellular side. The N-linked (GlcNAc...) asparagine glycan is linked to Asn-12. A helical transmembrane segment spans residues 34–58 (YAVLGAYMFFLIILGFPINFLTLYV). Topologically, residues 59-70 (TLEHKKLRTPLN) are cytoplasmic. Residues 71–93 (YILLNLAVADLFMVIGGFTTTMY) form a helical membrane-spanning segment. Residues 94-107 (SSMHGYFVLGRLGC) are Extracellular-facing. A disulfide bond links Cys-107 and Cys-184. A helical membrane pass occupies residues 108–130 (NLEGFSATLGGMISLWSLAVLAI). The short motif at 131–133 (ERW) is the 'Ionic lock' involved in activated form stabilization element. Over 131–149 (ERWVVVCKPISNFRFGENH) the chain is Cytoplasmic. Residues 150–170 (AIMGVSLTWTMALACTVPPLV) form a helical membrane-spanning segment. Residues 171–199 (GWSRYIPEGMQCSCGIDYYTRAEGFNNES) lie on the Extracellular side of the membrane. A glycan (N-linked (GlcNAc...) asparagine) is linked at Asn-197. Residues 200 to 221 (FVLYMFFCHFMVPLIIIFFCYG) traverse the membrane as a helical segment. The Cytoplasmic portion of the chain corresponds to 222–249 (RLLCAVKEAAAAQQESETTQRAEREVTR). A helical membrane pass occupies residues 250 to 271 (MVILMVIGYLVCWLPYASVAWF). Residues 272 to 283 (IFTHQGSEFGPL) are Extracellular-facing. The chain crosses the membrane as a helical span at residues 284–305 (FMTIPAFFAKSSSIYNPVIYIC). An N6-(retinylidene)lysine modification is found at Lys-293. Over 306-348 (MNKQFRNCMITTLFCGKNPFEGEEEGASSTKTEASSASSVSPA) the chain is Cytoplasmic. The S-palmitoyl cysteine moiety is linked to residue Cys-320. Positions 327 to 348 (GEEEGASSTKTEASSASSVSPA) are disordered. A compositionally biased stretch (low complexity) spans 332 to 348 (ASSTKTEASSASSVSPA).

It belongs to the G-protein coupled receptor 1 family. Opsin subfamily. Post-translationally, phosphorylated on some or all of the serine and threonine residues present in the C-terminal region. Contains one covalently linked retinal chromophore.

Its subcellular location is the membrane. The protein localises to the cell projection. The protein resides in the cilium. It is found in the photoreceptor outer segment. Functionally, photoreceptor required for image-forming vision at low light intensity. While most salt water fish species use retinal as chromophore, most freshwater fish use 3-dehydroretinal, or a mixture of retinal and 3-dehydroretinal. Light-induced isomerization of 11-cis to all-trans retinal triggers a conformational change that activates signaling via G-proteins. Subsequent receptor phosphorylation mediates displacement of the bound G-protein alpha subunit by arrestin and terminates signaling. In Neoniphon argenteus (Clearfin squirrelfish), this protein is Rhodopsin (rho).